The primary structure comprises 304 residues: Ribosomal RNA small subunit methyltransferase H (304 aa).

S-adenosyl-L-methionine contacts are provided by residues 37–39, aspartate 57, phenylalanine 79, aspartate 100, and histidine 107; that span reads GGH.

This sequence belongs to the methyltransferase superfamily. RsmH family.

The protein resides in the cytoplasm. It catalyses the reaction cytidine(1402) in 16S rRNA + S-adenosyl-L-methionine = N(4)-methylcytidine(1402) in 16S rRNA + S-adenosyl-L-homocysteine + H(+). Its function is as follows. Specifically methylates the N4 position of cytidine in position 1402 (C1402) of 16S rRNA. This chain is Ribosomal RNA small subunit methyltransferase H, found in Phocaeicola vulgatus (strain ATCC 8482 / DSM 1447 / JCM 5826 / CCUG 4940 / NBRC 14291 / NCTC 11154) (Bacteroides vulgatus).